Here is a 75-residue protein sequence, read N- to C-terminus: Putative antitoxin PH1062.1 (75 aa).

This sequence belongs to the UPF0330 family.

Functionally, possibly the antitoxin component of a type II toxin-antitoxin (TA) system. In Pyrococcus horikoshii (strain ATCC 700860 / DSM 12428 / JCM 9974 / NBRC 100139 / OT-3), this protein is Putative antitoxin PH1062.1.